Consider the following 656-residue polypeptide: Exoribonuclease 2 (656 aa).

The region spanning 190–518 is the RNB domain; it reads RSDLTKTPFF…LNHRLIKSVL (329 aa). An S1 motif domain is found at 564–649; sequence KWRYKAEIFD…ESGQLIGKLA (86 aa).

The protein belongs to the RNR ribonuclease family. RNase II subfamily.

Its subcellular location is the cytoplasm. It carries out the reaction Exonucleolytic cleavage in the 3'- to 5'-direction to yield nucleoside 5'-phosphates.. Functionally, involved in mRNA degradation. Hydrolyzes single-stranded polyribonucleotides processively in the 3' to 5' direction. This is Exoribonuclease 2 from Psychromonas ingrahamii (strain DSM 17664 / CCUG 51855 / 37).